The chain runs to 166 residues: Large ribosomal subunit protein mL49 (166 aa).

It belongs to the mitochondrion-specific ribosomal protein mL49 family. Component of the mitochondrial ribosome large subunit (39S) which comprises a 16S rRNA and about 50 distinct proteins. Interacts with OXA1L.

Its subcellular location is the mitochondrion. The sequence is that of Large ribosomal subunit protein mL49 (MRPL49) from Bos taurus (Bovine).